A 302-amino-acid chain; its full sequence is MLWFKNILVYRLNKEIALSMDELEQQLASLAFTPCSSQDMTKTGWVSPMGDRGEALIHVAGKQVMMCARKEDKILPATVIKQALQDKVEKLEGEQGRKLKKTEKATLKDEVVHTLLPRAFSKFSQTFIWLDLDKQLVIVDSGSAKRAEDNLALLRKTLGSLPVVPLNFNESVESKMTQWVRSGELPAGFTLMDEAELKAVLEEGGVIRCKKQELVSDEIATHIEAGKFVTKLSLDWEDRLQFMLCDDGSIKRIKFSDTLREQNDDIDKADFAQRFDADFVLMTGELSALIERVIEVLGGEAE.

Belongs to the RdgC family.

The protein localises to the cytoplasm. It localises to the nucleoid. May be involved in recombination. This Proteus mirabilis (strain HI4320) protein is Recombination-associated protein RdgC.